A 399-amino-acid polypeptide reads, in one-letter code: 4-hydroxy-3-methylbut-2-enyl diphosphate reductase (399 aa).

[4Fe-4S] cluster is bound at residue C66. H96 serves as a coordination point for (2E)-4-hydroxy-3-methylbut-2-enyl diphosphate. H96 is a dimethylallyl diphosphate binding site. H96 is a binding site for isopentenyl diphosphate. C157 is a [4Fe-4S] cluster binding site. H185 serves as a coordination point for (2E)-4-hydroxy-3-methylbut-2-enyl diphosphate. H185 is a binding site for dimethylallyl diphosphate. H185 is a binding site for isopentenyl diphosphate. E187 acts as the Proton donor in catalysis. T250 is a (2E)-4-hydroxy-3-methylbut-2-enyl diphosphate binding site. Residue C288 participates in [4Fe-4S] cluster binding. Residues S317, S318, N319, and S380 each coordinate (2E)-4-hydroxy-3-methylbut-2-enyl diphosphate. S317, S318, N319, and S380 together coordinate dimethylallyl diphosphate. Isopentenyl diphosphate is bound by residues S317, S318, N319, and S380.

This sequence belongs to the IspH family. It depends on [4Fe-4S] cluster as a cofactor.

The catalysed reaction is isopentenyl diphosphate + 2 oxidized [2Fe-2S]-[ferredoxin] + H2O = (2E)-4-hydroxy-3-methylbut-2-enyl diphosphate + 2 reduced [2Fe-2S]-[ferredoxin] + 2 H(+). The enzyme catalyses dimethylallyl diphosphate + 2 oxidized [2Fe-2S]-[ferredoxin] + H2O = (2E)-4-hydroxy-3-methylbut-2-enyl diphosphate + 2 reduced [2Fe-2S]-[ferredoxin] + 2 H(+). It participates in isoprenoid biosynthesis; dimethylallyl diphosphate biosynthesis; dimethylallyl diphosphate from (2E)-4-hydroxy-3-methylbutenyl diphosphate: step 1/1. The protein operates within isoprenoid biosynthesis; isopentenyl diphosphate biosynthesis via DXP pathway; isopentenyl diphosphate from 1-deoxy-D-xylulose 5-phosphate: step 6/6. In terms of biological role, catalyzes the conversion of 1-hydroxy-2-methyl-2-(E)-butenyl 4-diphosphate (HMBPP) into a mixture of isopentenyl diphosphate (IPP) and dimethylallyl diphosphate (DMAPP). Acts in the terminal step of the DOXP/MEP pathway for isoprenoid precursor biosynthesis. This chain is 4-hydroxy-3-methylbut-2-enyl diphosphate reductase, found in Synechococcus sp. (strain CC9605).